Consider the following 262-residue polypeptide: MSIVNILSVNVLNNPAKFSDPYKFEITFECLEPLKSDLEWKLTYVGSATSQSYDQILDTLLVGPIPIGINKFVFEADPPNIDLLPQLSDVLGVTVILLSCAYEDNEFVRVGYYVNNEMEGLNLQEMDDAEIKKVKVDISKVWRSILAEKPRVTRFNIQWDNPDFDDAPPVQPDADEEEEEEEADEMEEEFDEEGEGDEEEEEEDDGDGDGEGDGDGEGENDGKGSEEEEEEEIDIEEEEEESALANASAAEEKPEEKPETSQ.

Residues 157–262 (IQWDNPDFDD…KPEEKPETSQ (106 aa)) form a disordered region. 2 coiled-coil regions span residues 173 to 196 (DADE…EGEG) and 223 to 253 (KGSE…AEEK). Acidic residues-rich tracts occupy residues 173–219 (DADE…GEGE) and 226–242 (EEEE…EEES). The segment covering 250-262 (AEEKPEEKPETSQ) has biased composition (basic and acidic residues).

This sequence belongs to the ASF1 family. Interacts with histone H3 and histone H4.

Its subcellular location is the nucleus. In terms of biological role, histone chaperone that facilitates histone deposition and histone exchange and removal during nucleosome assembly and disassembly. The protein is Histone chaperone cia1 (cia1) of Schizosaccharomyces pombe (strain 972 / ATCC 24843) (Fission yeast).